Here is a 1023-residue protein sequence, read N- to C-terminus: Phosphoenolpyruvate carboxylase (1023 aa).

Catalysis depends on residues His-199 and Lys-669.

It belongs to the PEPCase type 1 family. Mg(2+) is required as a cofactor.

The catalysed reaction is oxaloacetate + phosphate = phosphoenolpyruvate + hydrogencarbonate. Functionally, forms oxaloacetate, a four-carbon dicarboxylic acid source for the tricarboxylic acid cycle. The polypeptide is Phosphoenolpyruvate carboxylase (Trichormus variabilis (strain ATCC 29413 / PCC 7937) (Anabaena variabilis)).